The sequence spans 953 residues: Leucine-rich repeat receptor protein kinase HPCA1 (953 aa).

A signal peptide spans 1-23 (MSSRTGASLLLILFFFQICSVSA). Over 24–558 (LTNGLDASAL…EVSSKSSNKS (535 aa)) the chain is Extracellular. LRR repeat units follow at residues 64-88 (NDRV…ISFL), 89-113 (SELR…IGNL), 115-137 (KLRN…IGTL), 138-162 (KELI…GLLS), 164-187 (LYWF…TSAP), and 192-216 (LLQT…LFSS). N-linked (GlcNAc...) asparagine glycosylation occurs at Asn-182. An N-linked (GlcNAc...) asparagine glycan is attached at Asn-217. 7 LRR repeats span residues 218–241 (MSLI…LSLV), 242–265 (KTLT…LNNL), 266–290 (TNLN…SLTS), 292–311 (YTLD…SWIS), 313–337 (LPSL…FFSP), 339–361 (QLQT…TDVS), and 362–384 (SQLE…ANKV). N-linked (GlcNAc...) asparagine glycans are attached at residues Asn-264, Asn-284, and Asn-298. N-linked (GlcNAc...) asparagine glycosylation is present at Asn-411. 2 disulfide bridges follow: Cys-421/Cys-424 and Cys-434/Cys-436. 4 N-linked (GlcNAc...) asparagine glycosylation sites follow: Asn-456, Asn-459, Asn-510, and Asn-523. The helical transmembrane segment at 559 to 579 (ILIGAVVGVVVLLLLLTIAGI) threads the bilayer. The Cytoplasmic portion of the chain corresponds to 580 to 953 (YALRQKKRAE…NFPASKLEPQ (374 aa)). Ser-606 and Ser-607 each carry phosphoserine. In terms of domain architecture, Protein kinase spans 631–905 (FSEANDVGGG…EVVKEIENIM (275 aa)). ATP is bound by residues 637–645 (VGGGGYGKV) and Lys-659. Residue Asp-755 is the Proton acceptor of the active site. 3 positions are modified to phosphothreonine: Thr-786, Thr-789, and Thr-790. The span at 912-921 (PNSDSATSSR) shows a compositional bias: polar residues. The tract at residues 912–953 (PNSDSATSSRTYEDAIKGSGDPYGSESFQYSGNFPASKLEPQ) is disordered. Residue Ser-942 is modified to Phosphoserine.

The protein belongs to the protein kinase superfamily. Ser/Thr protein kinase family. Autophosphorylated at Ser-606, Ser-607, Thr-786, Thr-789, Thr-790 and Ser-942 in response to extracellular hydrogen peroxide. Widely expressed.

It localises to the cell membrane. The enzyme catalyses L-seryl-[protein] + ATP = O-phospho-L-seryl-[protein] + ADP + H(+). It carries out the reaction L-threonyl-[protein] + ATP = O-phospho-L-threonyl-[protein] + ADP + H(+). Its activity is regulated as follows. Activated by autophosphorylation on serine and threonine residues in response to extracellular hydrogen peroxide. Its function is as follows. Leucine-rich repeat receptor protein kinase that acts as sensor of extracellular hydrogen peroxide. Required for intracellular calcium influx in response to extracellular hydrogen peroxide. Mediates hydrogen peroxide-induced activation of calcium channels in guard cells and is required for stomatal closure. The sequence is that of Leucine-rich repeat receptor protein kinase HPCA1 from Arabidopsis thaliana (Mouse-ear cress).